The sequence spans 521 residues: MQVSIWMLVITVLAAVAAYFAGSRVNKKDSGLIVKQSEELAAKMIDDARREAETITKEADLKARAEIIEAKAGHDREITEKKKDLQILEKRLQQKEENLDKKFGLIEQKELDMLKKEQSFVAREQNLAAKSEELSRASDVQQAKLEEISGMSASEAKKELMTSMEDEAKHDAAKRIKAIEEEARETADKKAKEIISLAVQRYAGEYVAEKTVSVVPLPSDEMKGRIIGREGRNIRALEAATGIDLIIDDTPEAVILSGFNPVRREVARMSLEKLIGDGRIHPGRIEEVVAKATEEVDLGIKEAGERAAFDLGVHGIHPEIIKLIGRLKYRTSYTQNIYQHSLEVAFICGIMAAELGINVKQAKRAGLLHDLGKAVDHEVEGSHAVIGADLARKYGESAKIVHAIMAHHEDEKPNSVLAVLVQAADALSGARPGARREMMETYVKRLDDLERIATSFGGVTNSFAIQAGREIRVMVSSDHVTDEQSLIMARDIAKKIEAEMTYPGQIKVNVIRETRAVEYAR.

The chain crosses the membrane as a helical span at residues 3 to 23; that stretch reads VSIWMLVITVLAAVAAYFAGS. Residues 211–271 enclose the KH domain; that stretch reads TVSVVPLPSD…VRREVARMSL (61 aa). Residues 337 to 430 enclose the HD domain; it reads IYQHSLEVAF…VQAADALSGA (94 aa).

This sequence belongs to the RNase Y family.

The protein localises to the cell membrane. Endoribonuclease that initiates mRNA decay. This is Ribonuclease Y from Pelobacter propionicus (strain DSM 2379 / NBRC 103807 / OttBd1).